The chain runs to 212 residues: Large ribosomal subunit protein uL3 (212 aa).

The tract at residues 135–161 (MTHGNSLSHRAPGSIGQNQSPGKVFKG) is disordered. Gln-153 carries the N5-methylglutamine modification.

The protein belongs to the universal ribosomal protein uL3 family. Part of the 50S ribosomal subunit. Forms a cluster with proteins L14 and L19. Post-translationally, methylated by PrmB.

Functionally, one of the primary rRNA binding proteins, it binds directly near the 3'-end of the 23S rRNA, where it nucleates assembly of the 50S subunit. The sequence is that of Large ribosomal subunit protein uL3 from Alteromonas mediterranea (strain DSM 17117 / CIP 110805 / LMG 28347 / Deep ecotype).